Reading from the N-terminus, the 1058-residue chain is Carbamoyl phosphate synthase large chain (1058 aa).

The carboxyphosphate synthetic domain stretch occupies residues 1 to 401 (MPKRKDIQKI…SLLKACRSLE (401 aa)). 12 residues coordinate ATP: R129, R169, G175, G176, R208, I210, E215, G241, I242, H243, Q284, and E298. An ATP-grasp 1 domain is found at 133–327 (KQLMQELDQP…IAKLAAKIAV (195 aa)). Mg(2+) is bound by residues Q284, E298, and N300. 3 residues coordinate Mn(2+): Q284, E298, and N300. The segment at 402–546 (IGVCHNEMTS…YSTYELENES (145 aa)) is oligomerization domain. Positions 547-929 (VQSNKESILV…ALYKAFEANN (383 aa)) are carbamoyl phosphate synthetic domain. In terms of domain architecture, ATP-grasp 2 spans 671–861 (EKALKELGIP…MAQIATKLIL (191 aa)). R707, S746, I748, E752, G777, V778, H779, S780, Q820, and E832 together coordinate ATP. The Mg(2+) site is built by Q820, E832, and N834. Positions 820, 832, and 834 each coordinate Mn(2+). Residues 930–1058 (SHLSEFGQIV…ESRCFNIEAI (129 aa)) enclose the MGS-like domain. Positions 930-1058 (SHLSEFGQIV…ESRCFNIEAI (129 aa)) are allosteric domain.

The protein belongs to the CarB family. As to quaternary structure, composed of two chains; the small (or glutamine) chain promotes the hydrolysis of glutamine to ammonia, which is used by the large (or ammonia) chain to synthesize carbamoyl phosphate. Tetramer of heterodimers (alpha,beta)4. Requires Mg(2+) as cofactor. The cofactor is Mn(2+).

The catalysed reaction is hydrogencarbonate + L-glutamine + 2 ATP + H2O = carbamoyl phosphate + L-glutamate + 2 ADP + phosphate + 2 H(+). It catalyses the reaction hydrogencarbonate + NH4(+) + 2 ATP = carbamoyl phosphate + 2 ADP + phosphate + 2 H(+). It functions in the pathway amino-acid biosynthesis; L-arginine biosynthesis; carbamoyl phosphate from bicarbonate: step 1/1. Its pathway is pyrimidine metabolism; UMP biosynthesis via de novo pathway; (S)-dihydroorotate from bicarbonate: step 1/3. In terms of biological role, large subunit of the glutamine-dependent carbamoyl phosphate synthetase (CPSase). CPSase catalyzes the formation of carbamoyl phosphate from the ammonia moiety of glutamine, carbonate, and phosphate donated by ATP, constituting the first step of 2 biosynthetic pathways, one leading to arginine and/or urea and the other to pyrimidine nucleotides. The large subunit (synthetase) binds the substrates ammonia (free or transferred from glutamine from the small subunit), hydrogencarbonate and ATP and carries out an ATP-coupled ligase reaction, activating hydrogencarbonate by forming carboxy phosphate which reacts with ammonia to form carbamoyl phosphate. This Streptococcus pyogenes serotype M1 protein is Carbamoyl phosphate synthase large chain.